A 233-amino-acid chain; its full sequence is Aquaglyceroporin AqpS (233 aa).

A run of 2 helical transmembrane segments spans residues 11–31 and 40–60; these read VAEA…GIMA and LALV…VTIL. An NPA 1 motif is present at residues 69 to 71; sequence NPA. 3 helical membrane-spanning segments follow: residues 89-109, 125-145, and 152-172; these read AYVI…HLMF, AQWL…LAGI, and VPWL…STSF. An NPA 2 motif is present at residues 174–176; sequence NPA. Residues 193–213 form a helical membrane-spanning segment; sequence GDLPGFVIAELLGAVCALALM.

This sequence belongs to the MIP/aquaporin (TC 1.A.8) family. NIP (TC 1.A.8.12) subfamily.

Its subcellular location is the cell inner membrane. Functionally, involved in resistance to arsenic. Facilitates efflux of arsenite [As(III)]. Arsenate [As(V)] enters the cell through phosphate transport systems and is reduced to arsenite by the arsenate reductase ArsC. Internally generated arsenite flows out of the cell by downhill movement through AqpS. Can also transport the highly toxic methylarsenite [MAs(III)] and the relatively non-toxic methylarsenate [MAs(V)]. May be a component of an methylarsenite resistance pathway in which methylarsenite enters cells via AqpS, is oxidized by ArsH to methylarsenate, which exits the cells via AqpS. This pathway may confer a selective advantage for R.melliloti to grow in the presence of environmental methylarsenicals. This Rhizobium meliloti (strain 1021) (Ensifer meliloti) protein is Aquaglyceroporin AqpS.